A 355-amino-acid chain; its full sequence is NADH dehydrogenase-like protein YutJ (355 aa).

It belongs to the NADH dehydrogenase family. Requires FAD as cofactor.

In Bacillus subtilis (strain 168), this protein is NADH dehydrogenase-like protein YutJ (yutJ).